We begin with the raw amino-acid sequence, 306 residues long: Ribonuclease Z (306 aa).

Zn(2+) is bound by residues H63, H65, D67, H68, H141, D208, and H266. Residue D67 is the Proton acceptor of the active site.

Belongs to the RNase Z family. In terms of assembly, homodimer. It depends on Zn(2+) as a cofactor.

It carries out the reaction Endonucleolytic cleavage of RNA, removing extra 3' nucleotides from tRNA precursor, generating 3' termini of tRNAs. A 3'-hydroxy group is left at the tRNA terminus and a 5'-phosphoryl group is left at the trailer molecule.. Zinc phosphodiesterase, which displays some tRNA 3'-processing endonuclease activity. Probably involved in tRNA maturation, by removing a 3'-trailer from precursor tRNA. This is Ribonuclease Z from Protochlamydia amoebophila (strain UWE25).